The sequence spans 61 residues: Large ribosomal subunit protein uL30 (61 aa).

This sequence belongs to the universal ribosomal protein uL30 family. In terms of assembly, part of the 50S ribosomal subunit.

The chain is Large ribosomal subunit protein uL30 from Parafrankia sp. (strain EAN1pec).